Here is a 585-residue protein sequence, read N- to C-terminus: NADP-reducing hydrogenase subunit HndD (585 aa).

The 2Fe-2S ferredoxin-type domain maps to 2–85; that stretch reads SMLTITIDGK…NMVVKTNSLR (84 aa). Positions 36, 52, 55, and 69 each coordinate [2Fe-2S] cluster. Residues 85–124 enclose the 4Fe-4S His(Cys)3-ligated-type domain; that stretch reads RVLNARRTVLELLLSDHPKDCLVCAKSGECELQTLAERFG. [4Fe-4S] cluster-binding residues include His-101, Cys-105, Cys-108, and Cys-114. 2 consecutive 4Fe-4S ferredoxin-type domains span residues 144–174 and 185–216; these read ASIIRDMDKCIMCRRCETMCNTVQTCGVLSG and PAFEMNLADTVCTNCGQCVAVCPTGALVEHEY.

As to quaternary structure, heterotetramer composed of HndA, HndB, HndC and HndD subunits. HndD is probably the hydrogenase subunit. [4Fe-4S] cluster is required as a cofactor.

It carries out the reaction H2 + NADP(+) = NADPH + H(+). Its activity is regulated as follows. Inhibited by oxygen. In terms of biological role, catalyzes the reduction of NADP in the presence of molecular H(2) to yield NADPH. The sequence is that of NADP-reducing hydrogenase subunit HndD (hndD) from Solidesulfovibrio fructosivorans (Desulfovibrio fructosivorans).